The sequence spans 33 residues: Kappa-theraphotoxin-Pg2a (33 aa).

Intrachain disulfides connect cysteine 2–cysteine 16, cysteine 9–cysteine 21, and cysteine 15–cysteine 28.

In terms of tissue distribution, expressed by the venom gland.

Its subcellular location is the secreted. Gating modifier of Kv2.1/KCNB1 channels. The polypeptide is Kappa-theraphotoxin-Pg2a (Chilobrachys guangxiensis (Chinese earth tiger tarantula)).